We begin with the raw amino-acid sequence, 2323 residues long: C2 domain-containing protein 3 (2323 aa).

Disordered regions lie at residues Met1–Thr27, Arg193–Gly215, Trp402–Asp426, Ser444–Ala509, Pro537–Pro556, and Lys698–Thr745. The span at Glu200 to Pro209 shows a compositional bias: polar residues. Ser453 carries the phosphoserine modification. The span at Lys474–Gln483 shows a compositional bias: basic and acidic residues. Residues Pro504–Ser663 form the C2 1 domain. The segment covering Lys698–Asn735 has biased composition (polar residues). Ser713 bears the Phosphoserine mark. C2 domains lie at Ser771 to Leu903, Gln969 to Asp1131, Ser1155 to Tyr1323, and Lys1383 to Ile1517. Residues Glu1550–Asp1574 are compositionally biased toward basic and acidic residues. Disordered regions lie at residues Glu1550–Ala1599 and Leu1798–His1824. Positions Leu1584–Ala1599 are enriched in polar residues. Positions Ala1598–Tyr1726 constitute a C2 6 domain. Ser1871 is modified (phosphoserine). Disordered regions lie at residues Phe1891–Asp1918, Ala1952–Leu2013, Ser2074–Trp2163, Ser2182–Thr2231, and Ser2261–Thr2323. The span at Ser1892 to Glu1904 shows a compositional bias: low complexity. 2 stretches are compositionally biased toward polar residues: residues Ala1952–Val1965 and Ser2074–Glu2083. Residues Ala2110–Val2125 are compositionally biased toward low complexity. The segment covering Pro2147–Ser2158 has biased composition (polar residues). Positions Ser2182–Glu2197 are enriched in low complexity. A compositionally biased stretch (basic and acidic residues) spans Ser2207–Pro2216. Residues Gln2222–Thr2231 are compositionally biased toward polar residues.

As to quaternary structure, interacts with OFD1; OFD1 may act as a negative regulator of C2CD3. Associates with the BBSome complex. Interacts with IFT88, BBS4 and PCM1.

The protein resides in the cytoplasm. The protein localises to the cytoskeleton. Its subcellular location is the cilium basal body. It localises to the microtubule organizing center. It is found in the centrosome. The protein resides in the centriole. Component of the centrioles that acts as a positive regulator of centriole elongation. Promotes assembly of centriolar distal appendage, a structure at the distal end of the mother centriole that acts as an anchor of the cilium, and is required for recruitment of centriolar distal appendages proteins CEP83, SCLT1, CEP89, FBF1 and CEP164. Not required for centriolar satellite integrity or RAB8 activation. Required for primary cilium formation. Required for sonic hedgehog/SHH signaling and for proteolytic processing of GLI3. This chain is C2 domain-containing protein 3 (C2cd3), found in Mus musculus (Mouse).